The chain runs to 268 residues: Energy-coupling factor transporter transmembrane protein EcfT (268 aa).

A run of 6 helical transmembrane segments spans residues 26-46 (ILAVLFYMVMVFLANSPLSYG), 47-67 (ILIGFIVLGAALAKLPAGLLL), 73-93 (LWIIILLTMVIHFVTDPGEAL), 116-136 (LVLLLLVSSLMTFTTSPIVLT), 151-171 (VPAHELAMMMTIALRFIPTLL), and 246-266 (ALTGLVMLALFVLLAFLRWGI).

Belongs to the energy-coupling factor EcfT family. Forms a stable energy-coupling factor (ECF) transporter complex composed of 2 membrane-embedded substrate-binding proteins (S component), 2 ATP-binding proteins (A component) and 2 transmembrane proteins (T component). May be able to interact with more than 1 S component at a time.

The protein localises to the cell membrane. Transmembrane (T) component of an energy-coupling factor (ECF) ABC-transporter complex. Unlike classic ABC transporters this ECF transporter provides the energy necessary to transport a number of different substrates. This is Energy-coupling factor transporter transmembrane protein EcfT from Acidaminococcus fermentans (strain ATCC 25085 / DSM 20731 / CCUG 9996 / CIP 106432 / VR4).